The chain runs to 158 residues: Large ribosomal subunit protein mL50 (158 aa).

This sequence belongs to the mitochondrion-specific ribosomal protein mL50 family. In terms of assembly, component of the mitochondrial ribosome large subunit (39S) which comprises a 16S rRNA and about 50 distinct proteins.

It localises to the mitochondrion. In Pongo abelii (Sumatran orangutan), this protein is Large ribosomal subunit protein mL50 (MRPL50).